The primary structure comprises 314 residues: Inactive chitinase-like protein 1 (314 aa).

Positions 1 to 19 are cleaved as a signal peptide; it reads MKEIVRALEGYGPPKDKAA. A Chitin-binding type-1 domain is found at 20 to 60; the sequence is EQCGWQAGGALCPGGLCCSQYGWCANTPEYCGSGCQSQCDG. Intrachain disulfides connect C22-C37, C31-C43, C36-C50, C54-C58, C92-C154, C166-C174, and C273-C305.

It belongs to the glycosyl hydrolase 19 family. Chitinase class I subfamily.

Its function is as follows. Inactive chitinase-like protein that does not exhibit hydrolytic activity toward chitin. Binds strongly to chitin and possesses antifungal activity toward the fungal pathogen Altenaria alternata in plate assays. Inhibits the growth of Fusarium oxysporum on plate assays. Probably involved in defense against fungal pathogens through a mechanism that only involves carbohydrate binding. This Hevea brasiliensis (Para rubber tree) protein is Inactive chitinase-like protein 1.